An 832-amino-acid chain; its full sequence is Cation/H(+) antiporter 21 (832 aa).

12 helical membrane-spanning segments follow: residues 33-55 (ISAA…RILY), 61-81 (LCLP…PTVL), 99-119 (LLET…GLGL), 132-152 (VIIA…LYYL), 161-181 (ILAG…PDLA), 200-220 (CAAV…MAIF), 236-256 (STIA…AWIF), 278-298 (IICS…AFLF), 319-339 (FLSG…ADIG), 352-372 (VVTS…SIFL), 379-399 (GLAI…ILNA), and 413-433 (HLTL…AIAY). Positions 792–802 (RQTAENNNQEP) are enriched in polar residues. The disordered stretch occupies residues 792 to 832 (RQTAENNNQEPVQGKAKTDHEATPFMEDEDDEVEHQYSMRR).

It belongs to the monovalent cation:proton antiporter 2 (CPA2) transporter (TC 2.A.37) family. CHX (TC 2.A.37.4) subfamily. Specifically expressed in root endodermal cells. Expressed in seedlings, roots, leaves, flowers, flower buds and pollen.

It is found in the cell membrane. Its function is as follows. Operates as a Na(+)/H(+) antiporter that plays a role in regulation of xylem Na(+) concentration and, consequently, Na(+) accumulation in the leaf. Required for pollen tube guidance, but not for normal pollen development. May also be involved in the development or function of the female gametophyte. The polypeptide is Cation/H(+) antiporter 21 (CHX21) (Arabidopsis thaliana (Mouse-ear cress)).